The sequence spans 433 residues: Dihydroorotase (433 aa).

Zn(2+)-binding residues include histidine 63 and histidine 65. Substrate-binding positions include 65-67 and asparagine 97; that span reads HLR. Aspartate 155, histidine 182, and histidine 235 together coordinate Zn(2+). Asparagine 283 is a binding site for substrate. Aspartate 310 is a Zn(2+) binding site. Residue aspartate 310 is part of the active site. Histidine 314 is a substrate binding site.

The protein belongs to the metallo-dependent hydrolases superfamily. DHOase family. Class I DHOase subfamily. Zn(2+) is required as a cofactor.

It catalyses the reaction (S)-dihydroorotate + H2O = N-carbamoyl-L-aspartate + H(+). Its pathway is pyrimidine metabolism; UMP biosynthesis via de novo pathway; (S)-dihydroorotate from bicarbonate: step 3/3. Functionally, catalyzes the reversible cyclization of carbamoyl aspartate to dihydroorotate. The polypeptide is Dihydroorotase (Anaeromyxobacter sp. (strain K)).